A 351-amino-acid chain; its full sequence is Photosystem II D2 protein (351 aa).

A helical transmembrane segment spans residues 39 to 59 (CSYLALGAWFTGTTFVTSWYT). His116 contacts chlorophyll a. A helical membrane pass occupies residues 123–139 (GFCLRQFEIARLVGIRP). Residues Gln128 and Asn141 each coordinate pheophytin a. Residues 151–164 (VFVSVFLIYPLGQA) traverse the membrane as a helical segment. His196 is a chlorophyll a binding site. The helical transmembrane segment at 206-226 (GALLCAIHGATVENTLFEDGE) threads the bilayer. Residues His213 and Phe260 each coordinate a plastoquinone. His213 is a Fe cation binding site. His267 provides a ligand contact to Fe cation. A helical transmembrane segment spans residues 277-293 (GLWTSSIGIIGLALNLR).

It belongs to the reaction center PufL/M/PsbA/D family. As to quaternary structure, PSII is composed of 1 copy each of membrane proteins PsbA, PsbB, PsbC, PsbD, PsbE, PsbF, PsbH, PsbI, PsbJ, PsbK, PsbL, PsbM, PsbT, PsbY, PsbZ, Psb30/Ycf12, at least 3 peripheral proteins of the oxygen-evolving complex and a large number of cofactors. It forms dimeric complexes. The cofactor is The D1/D2 heterodimer binds P680, chlorophylls that are the primary electron donor of PSII, and subsequent electron acceptors. It shares a non-heme iron and each subunit binds pheophytin, quinone, additional chlorophylls, carotenoids and lipids. There is also a Cl(-1) ion associated with D1 and D2, which is required for oxygen evolution. The PSII complex binds additional chlorophylls, carotenoids and specific lipids..

The protein resides in the plastid. Its subcellular location is the chloroplast thylakoid membrane. The enzyme catalyses 2 a plastoquinone + 4 hnu + 2 H2O = 2 a plastoquinol + O2. In terms of biological role, photosystem II (PSII) is a light-driven water:plastoquinone oxidoreductase that uses light energy to abstract electrons from H(2)O, generating O(2) and a proton gradient subsequently used for ATP formation. It consists of a core antenna complex that captures photons, and an electron transfer chain that converts photonic excitation into a charge separation. The D1/D2 (PsbA/PsbD) reaction center heterodimer binds P680, the primary electron donor of PSII as well as several subsequent electron acceptors. D2 is needed for assembly of a stable PSII complex. The sequence is that of Photosystem II D2 protein from Galdieria sulphuraria (Red alga).